Consider the following 1229-residue polypeptide: Receptor-type adenylate cyclase GRESAG 4.3 (1229 aa).

At 1–24 (MIARVCRLTKHSKPPHLPITLTTP) the chain is on the cytoplasmic side. A helical membrane pass occupies residues 25–45 (TLFLVVLVLLQLHPICVLVNV). The Extracellular segment spans residues 46-845 (DDGGGVTVKA…PNGNALTPAQ (800 aa)). 5 N-linked (GlcNAc...) asparagine glycosylation sites follow: N77, N84, N626, N693, and N768. The helical transmembrane segment at 846–866 (LAGVVGGSLFVVALAICLSVL) threads the bilayer. Residues 867–1229 (ACFTLRGTRD…SNDLSDMIRV (363 aa)) lie on the Cytoplasmic side of the membrane. Positions 889 to 1043 (TLIFTDIESS…RTSNMAARTE (155 aa)) constitute a Guanylate cyclase domain. 2 residues coordinate Mg(2+): D894 and D937.

The protein belongs to the adenylyl cyclase class-3 family. Mg(2+) serves as cofactor.

It is found in the membrane. It catalyses the reaction ATP = 3',5'-cyclic AMP + diphosphate. Its function is as follows. Could act as a receptor for an unknown ligand. In Trypanosoma brucei brucei, this protein is Receptor-type adenylate cyclase GRESAG 4.3 (GRESAG 4.3).